Reading from the N-terminus, the 421-residue chain is Probable indole-3-pyruvate monooxygenase YUCCA9 (421 aa).

29–34 (GAGPSG) is a binding site for FAD. NADP(+) is bound at residue 196 to 201 (GCGNSG).

This sequence belongs to the FMO family. FAD is required as a cofactor.

The catalysed reaction is indole-3-pyruvate + NADPH + O2 + H(+) = (indol-3-yl)acetate + CO2 + NADP(+) + H2O. The protein operates within plant hormone metabolism; auxin biosynthesis. Functionally, involved in auxin biosynthesis. Belongs to the set of redundant YUCCA genes probably responsible for auxin biosynthesis in roots. The sequence is that of Probable indole-3-pyruvate monooxygenase YUCCA9 (YUC9) from Arabidopsis thaliana (Mouse-ear cress).